The sequence spans 320 residues: MAFPKKKLQGLVAATITPMTEDGEINFSVIGQYVDYLVKEQGVKNIFVNGTTGEGLSLSISERRQVAEEWVTKGKDKLDQVIIHVGALSLKESQELAQHAAEIGADGIAVIAPFFLKPWTKDILINFLKEVAAAAPALPFYYYHIPALTGVKIRAEELLDGILDKIPTFQGLKFSDTDLLDFGQCVDQNRQQQFAFLFGVDEQLLSALVMGATGAVGSTYNYLGKKTNQMLEAFERKDFSLALNYQFCIQRFINFVVKLGFGVSQTKAIMTLVSGISMGPPRLPLQKASREFTDSAEAKLKSLDFLSFTDLKDGNLEAGS.

Aceneuramate is bound by residues T51 and T52. Y143 acts as the Proton donor in catalysis. K173 functions as the Schiff-base intermediate with substrate in the catalytic mechanism. Residues S175, G199, D201, E202, and S218 each coordinate aceneuramate.

Belongs to the DapA family. NanA subfamily. Homotetramer.

The protein localises to the cytoplasm. The catalysed reaction is aceneuramate = aldehydo-N-acetyl-D-mannosamine + pyruvate. Its pathway is amino-sugar metabolism; N-acetylneuraminate degradation. Functionally, catalyzes the cleavage of N-acetylneuraminic acid (sialic acid) to form pyruvate and N-acetylmannosamine via a Schiff base intermediate. It prevents sialic acids from being recycled and returning to the cell surface. Involved in the N-glycolylneuraminic acid (Neu5Gc) degradation pathway. The sequence is that of N-acetylneuraminate lyase from Pongo abelii (Sumatran orangutan).